We begin with the raw amino-acid sequence, 1522 residues long: Lysophospholipase nte1 (1522 aa).

Residues 1-24 form a disordered region; sequence MADGVTQVDSTGLHSFSPSPSLSS. The Cytoplasmic portion of the chain corresponds to 1–65; sequence MADGVTQVDS…LPPVPTTMAG (65 aa). Positions 15–24 are enriched in low complexity; that stretch reads SFSPSPSLSS. A helical transmembrane segment spans residues 66–86; sequence WIGWVFSFFFQVIPSVLYWII. Over 87–108 the chain is Lumenal; that stretch reads TFSTITLPTWLFTLFSMSLTFT. The helical transmembrane segment at 109–129 threads the bilayer; the sequence is MNFTTLLLIVLAVVSTISWFI. Topologically, residues 130 to 1522 are cytoplasmic; it reads RYRFLNMYSR…RTLAPRRASI (1393 aa). 3 disordered regions span residues 308–384, 523–544, and 757–776; these read VPNS…SVHP, RAATVVTPESAPAEHDTYGVSP, and TTTANSVGAGGTAANDSRRR. A compositionally biased stretch (basic residues) spans 369 to 381; sequence ESRKHSSRKRRKS. A nucleoside 3',5'-cyclic phosphate is bound by residues 680–800 and 840–960; these read GGTS…AVAS and RLTS…IAQR. The 165-residue stretch at 1219-1383 folds into the PNPLA domain; the sequence is LVLGGGGARG…IDNLTVDHMK (165 aa). Positions 1223–1228 match the GXGXXG motif; the sequence is GGGARG. The GXSXG motif lies at 1250-1254; sequence GTSIG. Ser1252 serves as the catalytic Nucleophile. Asp1370 serves as the catalytic Proton acceptor. A DGA/G motif is present at residues 1370–1372; sequence DGG. The disordered stretch occupies residues 1501 to 1522; that stretch reads LPEETEEKKKLQRTLAPRRASI.

This sequence belongs to the NTE family.

It localises to the endoplasmic reticulum membrane. It catalyses the reaction a 1-acyl-sn-glycero-3-phosphocholine + H2O = sn-glycerol 3-phosphocholine + a fatty acid + H(+). With respect to regulation, inhibited by organophosphorus esters. Intracellular phospholipase B that catalyzes the double deacylation of phosphatidylcholine (PC) to glycerophosphocholine (GroPCho). Plays an important role in membrane lipid homeostasis. Responsible for the rapid PC turnover in response to inositol, elevated temperatures, or when choline is present in the growth medium. The chain is Lysophospholipase nte1 (nte1) from Aspergillus fumigatus (strain ATCC MYA-4609 / CBS 101355 / FGSC A1100 / Af293) (Neosartorya fumigata).